Reading from the N-terminus, the 900-residue chain is Nitrate reductase [NADH] (900 aa).

Position 172 (cysteine 172) interacts with Mo-molybdopterin. One can recognise a Cytochrome b5 heme-binding domain in the interval 521–596; the sequence is TKMYSLSEVK…LEDYRVGELI (76 aa). The heme site is built by histidine 556 and histidine 579. An FAD-binding FR-type domain is found at 644–756; it reads REKIPCKLIS…KGPLGHIEYT (113 aa). FAD-binding positions include 696 to 699, 713 to 717, phenylalanine 718, phenylalanine 725, 730 to 732, and threonine 783; these read RAYT, VVKVY, and AMS.

The protein belongs to the nitrate reductase family. In terms of assembly, homodimer. FAD is required as a cofactor. It depends on heme as a cofactor. Mo-molybdopterin serves as cofactor.

It catalyses the reaction nitrite + NAD(+) + H2O = nitrate + NADH + H(+). Functionally, nitrate reductase is a key enzyme involved in the first step of nitrate assimilation in plants, fungi and bacteria. The chain is Nitrate reductase [NADH] (NIA) from Lotus japonicus (Lotus corniculatus var. japonicus).